A 180-amino-acid chain; its full sequence is Large ribosomal subunit protein uL6 (180 aa).

This sequence belongs to the universal ribosomal protein uL6 family. Part of the 50S ribosomal subunit.

Functionally, this protein binds to the 23S rRNA, and is important in its secondary structure. It is located near the subunit interface in the base of the L7/L12 stalk, and near the tRNA binding site of the peptidyltransferase center. The protein is Large ribosomal subunit protein uL6 of Borrelia hermsii (strain HS1 / DAH).